We begin with the raw amino-acid sequence, 667 residues long: Long-chain fatty acid transport protein 3 (667 aa).

A helical membrane pass occupies residues 3–23 (ALLLLLPLLLLLPLLLKLDVW). The interval 114–144 (TGGRRGSGRGSTEEGARVAPPAGDAAARGTT) is disordered. Residues 130-144 (RVAPPAGDAAARGTT) are compositionally biased toward low complexity. Residues 272–276 (TSGTT), His315, Thr412, Asp512, Arg527, and Lys619 each bind ATP.

Belongs to the ATP-dependent AMP-binding enzyme family. Expressed at high levels in adrenal gland, testis and ovary. Expressed at lower levels in adult brain. Found in adrenal cortical cells, spermatocytes and interstitial cells of the testis, theca cells of the ovary, cerebral cortical neurons, and cerebellar Purkinje cells (at protein level).

It localises to the mitochondrion membrane. The catalysed reaction is a fatty acid(in) = a fatty acid(out). It carries out the reaction a long-chain fatty acid + ATP + CoA = a long-chain fatty acyl-CoA + AMP + diphosphate. It catalyses the reaction (5Z,8Z,11Z,14Z)-eicosatetraenoate + ATP + CoA = (5Z,8Z,11Z,14Z)-eicosatetraenoyl-CoA + AMP + diphosphate. The enzyme catalyses hexadecanoate + ATP + CoA = hexadecanoyl-CoA + AMP + diphosphate. The catalysed reaction is (9Z)-octadecenoate + ATP + CoA = (9Z)-octadecenoyl-CoA + AMP + diphosphate. It carries out the reaction (9Z,12Z)-octadecadienoate + ATP + CoA = (9Z,12Z)-octadecadienoyl-CoA + AMP + diphosphate. It catalyses the reaction a very long-chain fatty acid + ATP + CoA = a very long-chain fatty acyl-CoA + AMP + diphosphate. The enzyme catalyses tetracosanoate + ATP + CoA = tetracosanoyl-CoA + AMP + diphosphate. In terms of biological role, mainly functions as an acyl-CoA ligase catalyzing the ATP-dependent formation of fatty acyl-CoA using LCFA and very-long-chain fatty acids (VLCFA) as substrates. Can mediate the levels of long-chain fatty acids (LCFA) in the cell by facilitating their transport across membranes. The protein is Long-chain fatty acid transport protein 3 (Slc27a3) of Mus musculus (Mouse).